We begin with the raw amino-acid sequence, 368 residues long: MLYYILRYINELYSLPGMGVIEYLTFRASAAAITALLIIIFAGQRFIRFLKSKFVEPIKEEAPPEHRKKKDVPTMGGLMIIFAIEVSAFLWAKIDDPHVWLIMLAVFWMGLIGFIDDYQKVVLKVKGGLAGHYKLIGQVTLGLVIGFYTWNDPVFSVLLSDTTVPFFKKLSVDYGIFYIPVVIFIITAVSNAVNLTDGLDGLAAGNAAIVTFALGVFAYLCGNAVYSGYLSIPFISGAGEVAVVSMAIVMACVGFLWFNSSPAEVFMGDTGSLSLGSAIAVIALMIKQELLLPVLAGVFFVETLSVSMQVAWFKISKKLYGEGRRIFLMAPLHHHFQLKGWAEQKIVIRFWIISILLFLTSLMTLKLR.

9 helical membrane passes run 23–43 (YLTFRASAAAITALLIIIFAG), 72–92 (VPTMGGLMIIFAIEVSAFLWA), 98–118 (HVWLIMLAVFWMGLIGFIDDY), 139–159 (VTLGLVIGFYTWNDPVFSVLL), 170–190 (LSVDYGIFYIPVVIFIITAVS), 201–221 (GLAAGNAAIVTFALGVFAYLC), 238–258 (AGEVAVVSMAIVMACVGFLWF), 281–301 (VIALMIKQELLLPVLAGVFFV), and 345–365 (KIVIRFWIISILLFLTSLMTL).

Belongs to the glycosyltransferase 4 family. MraY subfamily. Requires Mg(2+) as cofactor.

It localises to the cell inner membrane. The catalysed reaction is UDP-N-acetyl-alpha-D-muramoyl-L-alanyl-gamma-D-glutamyl-meso-2,6-diaminopimeloyl-D-alanyl-D-alanine + di-trans,octa-cis-undecaprenyl phosphate = di-trans,octa-cis-undecaprenyl diphospho-N-acetyl-alpha-D-muramoyl-L-alanyl-D-glutamyl-meso-2,6-diaminopimeloyl-D-alanyl-D-alanine + UMP. It participates in cell wall biogenesis; peptidoglycan biosynthesis. Catalyzes the initial step of the lipid cycle reactions in the biosynthesis of the cell wall peptidoglycan: transfers peptidoglycan precursor phospho-MurNAc-pentapeptide from UDP-MurNAc-pentapeptide onto the lipid carrier undecaprenyl phosphate, yielding undecaprenyl-pyrophosphoryl-MurNAc-pentapeptide, known as lipid I. The chain is Phospho-N-acetylmuramoyl-pentapeptide-transferase from Chlorobaculum tepidum (strain ATCC 49652 / DSM 12025 / NBRC 103806 / TLS) (Chlorobium tepidum).